The primary structure comprises 168 residues: Disulfide bond formation protein B 2 (168 aa).

The Cytoplasmic segment spans residues 1–14 (MSAPIGATRAERWT). Residues 15–31 (LLAIGVASFELVAGALW) traverse the membrane as a helical segment. The Periplasmic segment spans residues 32–49 (IQLAWQEDPCPLCIIQRY). A disulfide bridge connects residues C41 and C44. The chain crosses the membrane as a helical span at residues 50–64 (LFLLIALFTFVAAAG). The Cytoplasmic portion of the chain corresponds to 65-69 (GRRVA). The chain crosses the membrane as a helical span at residues 70–87 (LLRVLSLTTALAGAAVAV). Over 88–142 (RHIYVQAHPGFSCGFDALQPVIDSLPPAHWLPPVFKVGGLCETLYPPILGLSLPM) the chain is Periplasmic. The cysteines at positions 100 and 128 are disulfide-linked. The chain crosses the membrane as a helical span at residues 143-161 (WALVGFSAIAVALGWRIRA). At 162 to 168 (QAVIRTA) the chain is on the cytoplasmic side.

This sequence belongs to the DsbB family.

The protein resides in the cell inner membrane. Its function is as follows. Required for disulfide bond formation in some periplasmic proteins. Acts by oxidizing the DsbA protein. This chain is Disulfide bond formation protein B 2, found in Burkholderia lata (strain ATCC 17760 / DSM 23089 / LMG 22485 / NCIMB 9086 / R18194 / 383).